Reading from the N-terminus, the 711-residue chain is Ent-copalyl diphosphate synthase 1 (711 aa).

Lysine 145 provides a ligand contact to substrate. Aspartate 277 and aspartate 279 together coordinate Mg(2+). The DXDD motif signature appears at 277–280 (DIDD). Lysine 364 contributes to the substrate binding site.

Belongs to the terpene synthase family. Tpsc subfamily. The cofactor is Mg(2+).

It catalyses the reaction (2E,6E,10E)-geranylgeranyl diphosphate = ent-copalyl diphosphate. It functions in the pathway secondary metabolite biosynthesis; terpenoid biosynthesis. Involved in the biosynthesis of ent-kaurene diterpenoids natural products such as oridonin, miltiradiene, eriocalyxin B and nezukol, known to exhibit antitumor, anti-inflammatory and antibacterial activities. Catalyzes the conversion of (2E,6E,10E)-geranylgeranyl diphosphate (GGPP) to ent-copalyl diphosphate (ent-CPP). The polypeptide is Ent-copalyl diphosphate synthase 1 (Isodon japonicus (Scutellaria japonica)).